A 470-amino-acid polypeptide reads, in one-letter code: MTYTVRTYGCQMNVHDSERIAGVLEDEGYVKSGSDDADVVVLNTCAVRENADNRFYGNLGQLLQKKNNGRIRQIAVGGCLAQKDRHKIFEKAPWVDVVFGTHNLGSLPALLRRSRHNKTAEIEIKDFLETFPSSLPVRRESNYSAWVSISVGCNNTCTFCIVPSLRGKERDRRPGDILAEISALVSEGVLEVTLLGQNVNTYGVEFGDRSAFASLLRKAGAIEGLERLKFTSPHPAAFTSDVIDAMHDTQAVLPQLHMPLQSGSDRILRAMRRSYRAGKFLKIISEARNKIPNIAITTDIIVGFPGETEEDFQDTLNLVAEVRFASAFTFQYSPRPGTPAASMPNQIPGDIVQERYERLLDLQNRIALEENRKLIGKEVELLVTVGGRKDSMLDNRYTGRTPCGRLVHFSCLHQLRPGDFATVKIIYAAPYHLIGDNALTVRRTPAGDVWIQKNDTRSAQLVSLGMPRIR.

Positions 1-116 constitute an MTTase N-terminal domain; the sequence is MTYTVRTYGC…LPALLRRSRH (116 aa). Residues Cys-10, Cys-45, Cys-79, Cys-153, Cys-157, and Cys-160 each coordinate [4Fe-4S] cluster. Residues 139–369 enclose the Radical SAM core domain; that stretch reads RESNYSAWVS…LDLQNRIALE (231 aa). Residues 372 to 439 enclose the TRAM domain; sequence RKLIGKEVEL…PYHLIGDNAL (68 aa).

It belongs to the methylthiotransferase family. MiaB subfamily. Monomer. Requires [4Fe-4S] cluster as cofactor.

It is found in the cytoplasm. The catalysed reaction is N(6)-dimethylallyladenosine(37) in tRNA + (sulfur carrier)-SH + AH2 + 2 S-adenosyl-L-methionine = 2-methylsulfanyl-N(6)-dimethylallyladenosine(37) in tRNA + (sulfur carrier)-H + 5'-deoxyadenosine + L-methionine + A + S-adenosyl-L-homocysteine + 2 H(+). Its function is as follows. Catalyzes the methylthiolation of N6-(dimethylallyl)adenosine (i(6)A), leading to the formation of 2-methylthio-N6-(dimethylallyl)adenosine (ms(2)i(6)A) at position 37 in tRNAs that read codons beginning with uridine. The chain is tRNA-2-methylthio-N(6)-dimethylallyladenosine synthase from Tropheryma whipplei (strain Twist) (Whipple's bacillus).